Consider the following 192-residue polypeptide: Thymidine kinase (192 aa).

ATP-binding positions include 9 to 16 (ASMNAGKS) and 87 to 90 (DEAQ). Glu-88 functions as the Proton acceptor in the catalytic mechanism. Residues Cys-145, Cys-147, Cys-182, and His-185 each contribute to the Zn(2+) site.

It belongs to the thymidine kinase family. As to quaternary structure, homotetramer.

It localises to the cytoplasm. The catalysed reaction is thymidine + ATP = dTMP + ADP + H(+). This chain is Thymidine kinase, found in Novosphingobium aromaticivorans (strain ATCC 700278 / DSM 12444 / CCUG 56034 / CIP 105152 / NBRC 16084 / F199).